Consider the following 498-residue polypeptide: Type II secretion system protein E (498 aa).

ATP is bound at residue Gly261–Ser268. Cys394, Cys397, Cys425, and Cys428 together coordinate Zn(2+).

This sequence belongs to the GSP E family. Forms homooligomers; most probably hexamers. Interacts with OutL/GspL. It depends on Zn(2+) as a cofactor.

It localises to the cell inner membrane. The catalysed reaction is ATP + H2O + cellular proteinSide 1 = ADP + phosphate + cellular proteinSide 2.. Its function is as follows. ATPase component of the type II secretion system required for the energy-dependent secretion of extracellular factors such as proteases and toxins from the periplasm. Acts as a molecular motor to provide the energy that is required for assembly of the pseudopilus and the extrusion of substrates generated in the cytoplasm. The polypeptide is Type II secretion system protein E (outE) (Pectobacterium carotovorum subsp. carotovorum (Erwinia carotovora subsp. carotovora)).